A 191-amino-acid polypeptide reads, in one-letter code: Xanthine phosphoribosyltransferase (191 aa).

Xanthine-binding residues include leucine 20 and asparagine 27. 128–132 is a 5-phospho-alpha-D-ribose 1-diphosphate binding site; the sequence is ANGQA. Residue lysine 156 coordinates xanthine.

Belongs to the purine/pyrimidine phosphoribosyltransferase family. Xpt subfamily. As to quaternary structure, homodimer.

The protein resides in the cytoplasm. The catalysed reaction is XMP + diphosphate = xanthine + 5-phospho-alpha-D-ribose 1-diphosphate. It participates in purine metabolism; XMP biosynthesis via salvage pathway; XMP from xanthine: step 1/1. Converts the preformed base xanthine, a product of nucleic acid breakdown, to xanthosine 5'-monophosphate (XMP), so it can be reused for RNA or DNA synthesis. The sequence is that of Xanthine phosphoribosyltransferase from Acinetobacter baumannii (strain AB307-0294).